We begin with the raw amino-acid sequence, 169 residues long: Allophycocyanin subunit beta-18 (169 aa).

The residue at position 72 (asparagine 72) is an N4-methylasparagine. Cysteine 82 lines the (2R,3E)-phycocyanobilin pocket.

This sequence belongs to the phycobiliprotein family. In terms of assembly, heterodimer of an alpha and a beta chain. Post-translationally, contains one covalently linked bilin chromophore.

Its subcellular location is the plastid. The protein resides in the chloroplast thylakoid membrane. Its function is as follows. Light-harvesting photosynthetic bile pigment-protein from the phycobiliprotein complex. Allophycocyanin has a maximum absorption at approximately 650 nanometers. In Porphyra purpurea (Red seaweed), this protein is Allophycocyanin subunit beta-18 (apcF).